We begin with the raw amino-acid sequence, 381 residues long: G-protein coupled receptor homolog Q2/3L (381 aa).

Over 1–91 (MNYTLSTVSS…HCDDGVDTTS (91 aa)) the chain is Extracellular. Residues Asn2, Asn15, Asn19, Asn41, Asn50, Asn56, and Asn62 are each glycosylated (N-linked (GlcNAc...) asparagine; by host). Residues 92–112 (FGLITLYSTIFFLGLFGNIIV) traverse the membrane as a helical segment. The Cytoplasmic portion of the chain corresponds to 113–126 (LTVLRKYKIKTIQD). The chain crosses the membrane as a helical span at residues 127–147 (MFLLNLTLSDLIFVLVFPFNL). Topologically, residues 148-165 (YDSIAKQWSLGDCLCKFK) are extracellular. Residues 166–186 (AMFYFVGFYNSMSFITLMSID) form a helical membrane-spanning segment. Residues 187 to 206 (RYLAVVHPVKSMPIRTKRYG) are Cytoplasmic-facing. A helical transmembrane segment spans residues 207 to 227 (IVLSMVVWIVSTIESFPIMLF). At 228–251 (YETKKVYGITYCHVFYNDNAKIWK) the chain is on the extracellular side. A helical membrane pass occupies residues 252 to 272 (LFINFEINIFGMIIPLTILLY). Residues 273–294 (CYYKILNTLKTSQTKNKKAIKM) are Cytoplasmic-facing. Residues 295–315 (VFLIVICSVLFLLPFSVTVFV) form a helical membrane-spanning segment. Residues 316-336 (SSLYLLNVFSGCMALRFVNLA) are Extracellular-facing. The helical transmembrane segment at 337–357 (VHVAEIVSLCHCFINPLIYAF) threads the bilayer. Topologically, residues 358-381 (CSREFTKKLLRLRTTSSAGSISIG) are cytoplasmic.

Belongs to the G-protein coupled receptor 1 family.

Its subcellular location is the host cell membrane. Its function is as follows. Putative chemokine receptor. The polypeptide is G-protein coupled receptor homolog Q2/3L (Ovis aries (Sheep)).